Consider the following 285-residue polypeptide: Vesicle-associated membrane protein 725 (285 aa).

At 1–261 (MDRSVVPISL…MWFENMKIKL (261 aa)) the chain is on the cytoplasmic side. The region spanning 75-179 (FVARGTVILV…SLNREFGSKL (105 aa)) is the Longin domain. Positions 195 to 255 (KLAKVKAQVT…TKIRRKMWFE (61 aa)) constitute a v-SNARE coiled-coil homology domain. Residues 262-282 (IVLGIIITLILIIILSVCGGF) traverse the membrane as a helical; Anchor for type IV membrane protein segment. The Vesicular segment spans residues 283-285 (KCT).

The protein belongs to the synaptobrevin family. As to expression, expressed in flowers, leaves, stems and roots.

The protein localises to the cell membrane. Its subcellular location is the early endosome membrane. Its function is as follows. Involved in the targeting and/or fusion of transport vesicles to their target membrane. The protein is Vesicle-associated membrane protein 725 of Arabidopsis thaliana (Mouse-ear cress).